The chain runs to 317 residues: Transaldolase 1 (317 aa).

Lys132 serves as the catalytic Schiff-base intermediate with substrate.

The protein belongs to the transaldolase family. Type 1 subfamily. Homodimer.

The protein resides in the cytoplasm. It carries out the reaction D-sedoheptulose 7-phosphate + D-glyceraldehyde 3-phosphate = D-erythrose 4-phosphate + beta-D-fructose 6-phosphate. The protein operates within carbohydrate degradation; pentose phosphate pathway; D-glyceraldehyde 3-phosphate and beta-D-fructose 6-phosphate from D-ribose 5-phosphate and D-xylulose 5-phosphate (non-oxidative stage): step 2/3. Transaldolase is important for the balance of metabolites in the pentose-phosphate pathway. The polypeptide is Transaldolase 1 (Shigella sonnei (strain Ss046)).